A 1245-amino-acid chain; its full sequence is ATP-dependent helicase/deoxyribonuclease subunit B (1245 aa).

The interval 737–758 is disordered; the sequence is WDDQNNAPTTDLPDRPNPRASE. Basic and acidic residues predominate over residues 748-758; it reads LPDRPNPRASE.

This sequence belongs to the helicase family. AddB/RexB type 2 subfamily. In terms of assembly, heterodimer of AddA and RexB. The cofactor is Mg(2+).

In terms of biological role, the heterodimer acts as both an ATP-dependent DNA helicase and an ATP-dependent, dual-direction single-stranded exonuclease. Recognizes the chi site generating a DNA molecule suitable for the initiation of homologous recombination. This subunit has 5' -&gt; 3' nuclease activity but not helicase activity. The sequence is that of ATP-dependent helicase/deoxyribonuclease subunit B from Limosilactobacillus fermentum (strain NBRC 3956 / LMG 18251) (Lactobacillus fermentum).